Consider the following 204-residue polypeptide: Protein OPG030 (204 aa).

The 83-residue stretch at 95–177 (FLRQYINNNI…ITYSELTNAI (83 aa)) folds into the BACK domain.

The protein belongs to the orthopoxvirus OPG030 family.

The polypeptide is Protein OPG030 (OPG30) (Homo sapiens (Human)).